A 401-amino-acid chain; its full sequence is ATP phosphoribosyltransferase regulatory subunit (401 aa).

Belongs to the class-II aminoacyl-tRNA synthetase family. HisZ subfamily. As to quaternary structure, heteromultimer composed of HisG and HisZ subunits.

The protein resides in the cytoplasm. It participates in amino-acid biosynthesis; L-histidine biosynthesis; L-histidine from 5-phospho-alpha-D-ribose 1-diphosphate: step 1/9. In terms of biological role, required for the first step of histidine biosynthesis. May allow the feedback regulation of ATP phosphoribosyltransferase activity by histidine. The polypeptide is ATP phosphoribosyltransferase regulatory subunit (Desulforamulus reducens (strain ATCC BAA-1160 / DSM 100696 / MI-1) (Desulfotomaculum reducens)).